The sequence spans 194 residues: Holliday junction branch migration complex subunit RuvA (194 aa).

The domain I stretch occupies residues 1–64 (MISSLNGILE…EDALSLFGFA (64 aa)). Residues 65 to 143 (TTEELSLFET…KNWEAGVLSQ (79 aa)) are domain II. Residues 144–149 (VTEANS) form a flexible linker region. Residues 149 to 194 (SDILATLTALGYSSSEAAKAISSLGDNGDLPLEERIKLALNYFNNK) form a domain III region.

This sequence belongs to the RuvA family. Homotetramer. Forms an RuvA(8)-RuvB(12)-Holliday junction (HJ) complex. HJ DNA is sandwiched between 2 RuvA tetramers; dsDNA enters through RuvA and exits via RuvB. An RuvB hexamer assembles on each DNA strand where it exits the tetramer. Each RuvB hexamer is contacted by two RuvA subunits (via domain III) on 2 adjacent RuvB subunits; this complex drives branch migration. In the full resolvosome a probable DNA-RuvA(4)-RuvB(12)-RuvC(2) complex forms which resolves the HJ.

The protein resides in the cytoplasm. In terms of biological role, the RuvA-RuvB-RuvC complex processes Holliday junction (HJ) DNA during genetic recombination and DNA repair, while the RuvA-RuvB complex plays an important role in the rescue of blocked DNA replication forks via replication fork reversal (RFR). RuvA specifically binds to HJ cruciform DNA, conferring on it an open structure. The RuvB hexamer acts as an ATP-dependent pump, pulling dsDNA into and through the RuvAB complex. HJ branch migration allows RuvC to scan DNA until it finds its consensus sequence, where it cleaves and resolves the cruciform DNA. This is Holliday junction branch migration complex subunit RuvA from Dehalococcoides mccartyi (strain CBDB1).